Reading from the N-terminus, the 587-residue chain is Ran GTPase-activating protein 1 (587 aa).

An N-acetylalanine modification is found at A2. K8 participates in a covalent cross-link: Glycyl lysine isopeptide (Lys-Gly) (interchain with G-Cter in SUMO1); alternate. A Glycyl lysine isopeptide (Lys-Gly) (interchain with G-Cter in SUMO2); alternate cross-link involves residue K8. A Glycyl lysine isopeptide (Lys-Gly) (interchain with G-Cter in SUMO2) cross-link involves residue K15. At S24 the chain carries Phosphoserine. LRR repeat units lie at residues 48–71, 111–134, 207–230, and 235–258; these read FDSL…VIAK, GAQL…GFEA, IGTL…ALAQ, and NPLL…AMAE. K279 participates in a covalent cross-link: Glycyl lysine isopeptide (Lys-Gly) (interchain with G-Cter in SUMO2). LRR repeat units follow at residues 292-319 and 320-343; these read LPKL…AMAD and KAEL…QLQE. S301 carries the post-translational modification Phosphoserine. Residues 357 to 430 are disordered; that stretch reads LSDDEDEEEE…EPAPVLSSPP (74 aa). Position 358 is a phosphoserine (S358). Over residues 358–397 the composition is skewed to acidic residues; sequence SDDEDEEEEEEGEEEEEEAEEEEEEDEEEEEEEEEEEEEE. Residues 400–410 show a composition bias toward polar residues; sequence QRGQGEKSATP. T409 carries the phosphothreonine; by CDK2 modification. 2 positions are modified to phosphoserine: S428 and S435. Residue T436 is modified to Phosphothreonine. Position 442 is a phosphoserine (S442). A Glycyl lysine isopeptide (Lys-Gly) (interchain with G-Cter in SUMO2) cross-link involves residue K452. Residues 523–526 carry the SUMO conjugation motif; the sequence is LKSE. K524 is covalently cross-linked (Glycyl lysine isopeptide (Lys-Gly) (interchain with G-Cter in SUMO1); alternate). Residue K524 forms a Glycyl lysine isopeptide (Lys-Gly) (interchain with G-Cter in SUMO2); alternate linkage. K524 is modified (N6-acetyllysine; alternate). K586 participates in a covalent cross-link: Glycyl lysine isopeptide (Lys-Gly) (interchain with G-Cter in SUMO2).

It belongs to the RNA1 family. Homodimer. Interacts with RAN. Forms a complex with RANBP2/NUP358, NXF1 and NXT1. Forms a tight complex in association with RANBP2/NUP358 and UBE2I/UBC9, the ubiquitin-conjugating enzyme E2. Interacts with UBE2I; the interaction conjugates SUMO1 to RANGAP1, and subsequently stabilizes interactions of sumoylated RANGAP1 with RANBP2/NUP358. The complex composed of RANBP2, SUMO1, RANGAP1 and UBE2I associates with nuclear pore complexes. Identified in a complex composed of RAN, RANBP2, sumoylated RANGAP1, UBE2I and XPO1. Identified in a complex composed of RAN, RANGAP1 and RANBP1. Interacts with TRAF6. Interacts with SUMO1 and SENP1. Interacts (when sumoylated) with MYCBP2; interaction inhibits MYCBP2 E3 ubiquitin-protein ligase activity and promotes MYCBP2 translocation to the nucleus. Phosphorylation occurs before nuclear envelope breakdown and continues throughout mitosis. Phosphorylated by the M-phase kinase cyclin B/Cdk1, in vitro. Differential timimg of dephosphorylation occurs during phases of mitosis. The phosphorylated form remains associated with RANBP2/NUP358 and the SUMO E2-conjugating enzyme, UBE2I, on nuclear pore complex (NPC) diassembly and during mitosis. In terms of processing, sumoylated. Sumoylation is necessary for targeting to the nuclear envelope (NE), and for association with mitotic spindles and kinetochores during mitosis. Also required for interaction with RANBP2 and is mediated by UBE2I. Desumoylated by HINT1. In terms of tissue distribution, highly expressed in brain, thymus and testis.

The protein localises to the cytoplasm. Its subcellular location is the nucleus. The protein resides in the nucleoplasm. It is found in the nucleus envelope. It localises to the chromosome. The protein localises to the centromere. Its subcellular location is the kinetochore. The protein resides in the cytoskeleton. It is found in the spindle. Its function is as follows. GTPase activator for RAN. Converts cytoplasmic GTP-bound RAN to GDP-bound RAN, which is essential for RAN-mediated nuclear import and export. Mediates dissociation of cargo from nuclear export complexes containing XPO1, RAN and RANBP2 after nuclear export. The chain is Ran GTPase-activating protein 1 (RANGAP1) from Homo sapiens (Human).